Consider the following 579-residue polypeptide: Folliculin (579 aa).

Positions 30–81 (PQGDGNEDSPGQGEQAEEEEGGIQMNSRMRAHSPAEGASVESSSPGPKKSDM) are disordered. A phosphoserine mark is found at S62 and S73. The uDENN FLCN/SMCR8-type domain maps to 86 to 242 (RSLAAGHPGY…RNGNAARSLT (157 aa)). Residues 210–220 (AEQFGCPQRAQ) form an essential for interaction with LDHA region. Positions 287 to 310 (EKLADLEEESESWDNSEAEEEEKA) form a coiled coil. Over residues 294-308 (EESESWDNSEAEEEE) the composition is skewed to acidic residues. A disordered region spans residues 294-337 (EESESWDNSEAEEEEKAPVLPESTEGRELTQGPAESSSLSGCGS). Phosphoserine is present on S302. A compositionally biased stretch (polar residues) spans 326-336 (PAESSSLSGCG). Residues 339-491 (QPRKLPVFKS…ILNKIEAALT (153 aa)) enclose the cDENN FLCN/SMCR8-type domain. Phosphoserine; by ULK1 occurs at positions 406, 537, and 542. The dDENN FLCN/SMCR8-type domain maps to 493 to 558 (QNLSVDVVDQ…LLKFWMTGLS (66 aa)). A Phosphoserine modification is found at S571.

It belongs to the folliculin family. Interacts (via C-terminus) with FNIP1 or FNIP2 (via C-terminus). Component of the lysosomal folliculin complex (LFC), composed of FLCN, FNIP1 (or FNIP2), RagA/RRAGA or RagB/RRAGB GDP-bound, RagC/RRAGC or RagD/RRAGD GTP-bound, and Ragulator. Interaction with FNIP1 or FNIP2 mediates indirect interaction with the PRKAA1, PRKAB1 and PRKAG1 subunits of 5'-AMP-activated protein kinase (AMPK). Interacts with HSP90AA1 in the presence of FNIP1. Interacts with HSP70, STUB1, CDC37, AHSA1, CCT2, STIP1, PTGES3 and PPP5C. Interacts with GABARAP; interaction takes place in the presence of FNIP1 and/or FNIP2. Interacts with RILP; the interaction is direct and promotes association between RILP and RAB34. Interacts with KIF3A and KIF3B. Interacts with lactate dehydrogenase LDHA, but not LDHB; the interaction is direct, may preferentially bind LDHA dimers rather than tetramers, and regulates LDHA activity, acting as an uncompetitive inhibitor. In terms of processing, phosphorylation by ULK1 modulates the interaction with GABARAP and is required to regulate autophagy. In terms of tissue distribution, expressed in most tissues tested, including skin, lung, kidney, heart, testis and stomach.

It localises to the lysosome membrane. Its subcellular location is the cytoplasm. The protein resides in the cytosol. The protein localises to the cell projection. It is found in the cilium. It localises to the cytoskeleton. Its subcellular location is the microtubule organizing center. The protein resides in the centrosome. The protein localises to the spindle. It is found in the nucleus. GTPase-activating activity is inhibited in the folliculin complex (LFC), which stabilizes the GDP-bound state of RagA/RRAGA (or RagB/RRAGB), because Arg-164 is located far from the RagC/RRAGC or RagD/RRAGD nucleotide pocket. Disassembly of the LFC complex upon amino acid restimulation liberates the GTPase-activating activity. Its function is as follows. Multi-functional protein, involved in both the cellular response to amino acid availability and in the regulation of glycolysis. GTPase-activating protein that plays a key role in the cellular response to amino acid availability through regulation of the non-canonical mTORC1 signaling cascade controlling the MiT/TFE factors TFEB and TFE3. Activates mTORC1 by acting as a GTPase-activating protein: specifically stimulates GTP hydrolysis by RagC/RRAGC or RagD/RRAGD, promoting the conversion to the GDP-bound state of RagC/RRAGC or RagD/RRAGD, and thereby activating the kinase activity of mTORC1. The GTPase-activating activity is inhibited during starvation and activated in presence of nutrients. Acts as a key component for non-canonical mTORC1-dependent control of the MiT/TFE factors TFEB and TFE3, while it is not involved in mTORC1-dependent phosphorylation of canonical RPS6KB1/S6K1 and EIF4EBP1/4E-BP1. In low-amino acid conditions, the lysosomal folliculin complex (LFC) is formed on the membrane of lysosomes, which inhibits the GTPase-activating activity of FLCN, inactivates mTORC1 and maximizes nuclear translocation of TFEB and TFE3. Upon amino acid restimulation, RagA/RRAGA (or RagB/RRAGB) nucleotide exchange promotes disassembly of the LFC complex and liberates the GTPase-activating activity of FLCN, leading to activation of mTORC1 and subsequent cytoplasmic retention of TFEB and TFE3. Indirectly acts as a positive regulator of Wnt signaling by promoting mTOR-dependent cytoplasmic retention of MiT/TFE factor TFE3. Required for the exit of hematopoietic stem cell from pluripotency by promoting mTOR-dependent cytoplasmic retention of TFE3, thereby increasing Wnt signaling. Acts as an inhibitor of browning of adipose tissue by regulating mTOR-dependent cytoplasmic retention of TFE3. Involved in the control of embryonic stem cells differentiation; together with LAMTOR1 it is necessary to recruit and activate RagC/RRAGC and RagD/RRAGD at the lysosomes, and to induce exit of embryonic stem cells from pluripotency via non-canonical, mTOR-independent TFE3 inactivation. In response to flow stress, regulates STK11/LKB1 accumulation and mTORC1 activation through primary cilia: may act by recruiting STK11/LKB1 to primary cilia for activation of AMPK resided at basal bodies, causing mTORC1 down-regulation. Together with FNIP1 and/or FNIP2, regulates autophagy: following phosphorylation by ULK1, interacts with GABARAP and promotes autophagy. Required for starvation-induced perinuclear clustering of lysosomes by promoting association of RILP with its effector RAB34. Regulates glycolysis by binding to lactate dehydrogenase LDHA, acting as an uncompetitive inhibitor. This chain is Folliculin, found in Homo sapiens (Human).